Consider the following 569-residue polypeptide: Urease subunit alpha (569 aa).

Residues 131–569 (GAIDSHIHFI…LPLAQRYLLL (439 aa)) enclose the Urease domain. 3 residues coordinate Ni(2+): histidine 136, histidine 138, and lysine 219. N6-carboxylysine is present on lysine 219. Histidine 221 serves as a coordination point for substrate. Ni(2+) contacts are provided by histidine 248 and histidine 274. The Proton donor role is filled by histidine 322. Aspartate 362 serves as a coordination point for Ni(2+).

It belongs to the metallo-dependent hydrolases superfamily. Urease alpha subunit family. In terms of assembly, heterotrimer of UreA (gamma), UreB (beta) and UreC (alpha) subunits. Three heterotrimers associate to form the active enzyme. Requires Ni cation as cofactor. Carboxylation allows a single lysine to coordinate two nickel ions.

Its subcellular location is the cytoplasm. It catalyses the reaction urea + 2 H2O + H(+) = hydrogencarbonate + 2 NH4(+). The protein operates within nitrogen metabolism; urea degradation; CO(2) and NH(3) from urea (urease route): step 1/1. The chain is Urease subunit alpha from Prochlorococcus marinus (strain NATL1A).